Reading from the N-terminus, the 181-residue chain is Protein GrpE (181 aa).

It belongs to the GrpE family. Homodimer.

It localises to the cytoplasm. Participates actively in the response to hyperosmotic and heat shock by preventing the aggregation of stress-denatured proteins, in association with DnaK and GrpE. It is the nucleotide exchange factor for DnaK and may function as a thermosensor. Unfolded proteins bind initially to DnaJ; upon interaction with the DnaJ-bound protein, DnaK hydrolyzes its bound ATP, resulting in the formation of a stable complex. GrpE releases ADP from DnaK; ATP binding to DnaK triggers the release of the substrate protein, thus completing the reaction cycle. Several rounds of ATP-dependent interactions between DnaJ, DnaK and GrpE are required for fully efficient folding. The protein is Protein GrpE of Verminephrobacter eiseniae (strain EF01-2).